A 365-amino-acid chain; its full sequence is tRNA-specific 2-thiouridylase MnmA (365 aa).

ATP contacts are provided by residues 14–21 and Leu-40; that span reads AMSGGVDS. Residue Cys-108 is the Nucleophile of the active site. Cys-108 and Cys-204 are oxidised to a cystine. An ATP-binding site is contributed by Gly-132. Positions 154 to 156 are interaction with tRNA; sequence KDQ. The active-site Cysteine persulfide intermediate is Cys-204.

Belongs to the MnmA/TRMU family.

It is found in the cytoplasm. The catalysed reaction is S-sulfanyl-L-cysteinyl-[protein] + uridine(34) in tRNA + AH2 + ATP = 2-thiouridine(34) in tRNA + L-cysteinyl-[protein] + A + AMP + diphosphate + H(+). Its function is as follows. Catalyzes the 2-thiolation of uridine at the wobble position (U34) of tRNA, leading to the formation of s(2)U34. This chain is tRNA-specific 2-thiouridylase MnmA, found in Rickettsia massiliae (strain Mtu5).